Consider the following 106-residue polypeptide: uORF protein (106 aa).

Residues 1 to 19 (MDLETRVSGHEKPQRRNPE) are compositionally biased toward basic and acidic residues. The disordered stretch occupies residues 1–31 (MDLETRVSGHEKPQRRNPEDPDCQYAKTRSS).

The protein resides in the host cytoplasm. The protein localises to the host cytoskeleton. Functionally, plays a role in viral replication. The sequence is that of uORF protein from Zika virus (ZIKV).